The following is a 329-amino-acid chain: Probable cell division protein WhiA (329 aa).

The segment at residues 276–309 (SLEELGKVHEPPLTKDAIAGRIRRLLALADKTAR) is a DNA-binding region (H-T-H motif). Residues 308–329 (ARSNGEPTTLESLPVEMRDDRG) are disordered. Residues 309–318 (RSNGEPTTLE) show a composition bias toward polar residues.

The protein belongs to the WhiA family.

Functionally, involved in cell division and chromosome segregation. This chain is Probable cell division protein WhiA, found in Cutibacterium acnes (strain DSM 16379 / KPA171202) (Propionibacterium acnes).